Consider the following 455-residue polypeptide: tRNA-2-methylthio-N(6)-dimethylallyladenosine synthase (455 aa).

In terms of domain architecture, MTTase N-terminal spans 18-136; sequence KLFFIQTYGC…FPEYLNRVKT (119 aa). Residues C27, C63, C97, C173, C177, and C180 each coordinate [4Fe-4S] cluster. The Radical SAM core domain occupies 159–389; sequence RKSDIKGFVT…VEIVNTGIAK (231 aa). Residues 392–455 enclose the TRAM domain; the sequence is KDAEGKIYEV…SFSLIGEVEK (64 aa).

This sequence belongs to the methylthiotransferase family. MiaB subfamily. Monomer. Requires [4Fe-4S] cluster as cofactor.

It is found in the cytoplasm. It catalyses the reaction N(6)-dimethylallyladenosine(37) in tRNA + (sulfur carrier)-SH + AH2 + 2 S-adenosyl-L-methionine = 2-methylsulfanyl-N(6)-dimethylallyladenosine(37) in tRNA + (sulfur carrier)-H + 5'-deoxyadenosine + L-methionine + A + S-adenosyl-L-homocysteine + 2 H(+). Functionally, catalyzes the methylthiolation of N6-(dimethylallyl)adenosine (i(6)A), leading to the formation of 2-methylthio-N6-(dimethylallyl)adenosine (ms(2)i(6)A) at position 37 in tRNAs that read codons beginning with uridine. The chain is tRNA-2-methylthio-N(6)-dimethylallyladenosine synthase from Clostridium beijerinckii (strain ATCC 51743 / NCIMB 8052) (Clostridium acetobutylicum).